Consider the following 163-residue polypeptide: Transcriptional repressor NrdR (163 aa).

Residues 3 to 34 fold into a zinc finger; the sequence is CPFCAYADTRVVDSRLADDGGSVRRRRECPQC. Positions 49-139 constitute an ATP-cone domain; it reads PVVVKTDGRR…VYRRFEDVDA (91 aa).

It belongs to the NrdR family. Zn(2+) serves as cofactor.

In terms of biological role, negatively regulates transcription of bacterial ribonucleotide reductase nrd genes and operons by binding to NrdR-boxes. The sequence is that of Transcriptional repressor NrdR from Acidithiobacillus ferrooxidans (strain ATCC 23270 / DSM 14882 / CIP 104768 / NCIMB 8455) (Ferrobacillus ferrooxidans (strain ATCC 23270)).